Reading from the N-terminus, the 569-residue chain is Urease subunit alpha (569 aa).

A Urease domain is found at 131-569; that stretch reads GGIDAHIHWI…LPLAQRYFLF (439 aa). Ni(2+) is bound by residues His136, His138, and Lys219. At Lys219 the chain carries N6-carboxylysine. A substrate-binding site is contributed by His221. Positions 248 and 274 each coordinate Ni(2+). The active-site Proton donor is His322. Asp362 is a Ni(2+) binding site.

This sequence belongs to the metallo-dependent hydrolases superfamily. Urease alpha subunit family. In terms of assembly, heterotrimer of UreA (gamma), UreB (beta) and UreC (alpha) subunits. Three heterotrimers associate to form the active enzyme. It depends on Ni cation as a cofactor. In terms of processing, carboxylation allows a single lysine to coordinate two nickel ions.

The protein resides in the cytoplasm. The catalysed reaction is urea + 2 H2O + H(+) = hydrogencarbonate + 2 NH4(+). The protein operates within nitrogen metabolism; urea degradation; CO(2) and NH(3) from urea (urease route): step 1/1. This is Urease subunit alpha from Magnetococcus marinus (strain ATCC BAA-1437 / JCM 17883 / MC-1).